Here is a 436-residue protein sequence, read N- to C-terminus: 3-ketoacyl-CoA thiolase (436 aa).

Cysteine 99 functions as the Acyl-thioester intermediate in the catalytic mechanism. Residues histidine 392 and cysteine 422 each act as proton acceptor in the active site.

The protein belongs to the thiolase-like superfamily. Thiolase family. Heterotetramer of two alpha chains (FadJ) and two beta chains (FadI).

It is found in the cytoplasm. It catalyses the reaction an acyl-CoA + acetyl-CoA = a 3-oxoacyl-CoA + CoA. It functions in the pathway lipid metabolism; fatty acid beta-oxidation. Catalyzes the final step of fatty acid oxidation in which acetyl-CoA is released and the CoA ester of a fatty acid two carbons shorter is formed. The polypeptide is 3-ketoacyl-CoA thiolase (Shewanella baltica (strain OS185)).